A 1748-amino-acid chain; its full sequence is RANBP2-like and GRIP domain-containing protein 1 (1748 aa).

Position 14 is a phosphothreonine (Thr-14). TPR repeat units follow at residues 51 to 84 (PRAH…NPPQ), 575 to 608 (QKMG…LKII), and 639 to 672 (EDAH…VSYW). The interval 751 to 796 (GPLYKNGSLRNADSEIKHSTPSPTKYSLSPSKSYKYSPKTPPRWAE) is disordered. Residues 769 to 788 (STPSPTKYSLSPSKSYKYSP) are compositionally biased toward low complexity. The 137-residue stretch at 1021–1157 (HFEPVVQMPE…FEECQRLLLD (137 aa)) folds into the RanBD1 1 domain. Disordered stretches follow at residues 1198 to 1233 (TKVT…TLEW) and 1291 to 1316 (AKLN…ERDG). The segment covering 1220–1229 (IKPNPENTGP) has biased composition (polar residues). The span at 1302–1314 (TDEESDVTQEEER) shows a compositional bias: acidic residues. A RanBD1 2 domain is found at 1318–1454 (YFEPVVPLPD…FDEAKTAQEK (137 aa)). A compositionally biased stretch (polar residues) spans 1565 to 1578 (NDSETSSVAQSGSE). The segment at 1565-1606 (NDSETSSVAQSGSESKVEPKKCELSKNSDIEQSSDSKVKNLS) is disordered. Over residues 1579–1602 (SKVEPKKCELSKNSDIEQSSDSKV) the composition is skewed to basic and acidic residues. The region spanning 1685–1735 (QEESAANVEHLKNVLLQFIFLKPGSERESLLPVINTMLQLSPEEKGKLAAV) is the GRIP domain.

The chain is RANBP2-like and GRIP domain-containing protein 1 (RGPD1) from Homo sapiens (Human).